Here is a 481-residue protein sequence, read N- to C-terminus: Cobyric acid synthase (481 aa).

A GATase cobBQ-type domain is found at 248 to 435 (NTVIAVPMLP…LHGLFHGGAF (188 aa)). Catalysis depends on C329, which acts as the Nucleophile. H427 is a catalytic residue.

The protein belongs to the CobB/CobQ family. CobQ subfamily.

It functions in the pathway cofactor biosynthesis; adenosylcobalamin biosynthesis. Its function is as follows. Catalyzes amidations at positions B, D, E, and G on adenosylcobyrinic A,C-diamide. NH(2) groups are provided by glutamine, and one molecule of ATP is hydrogenolyzed for each amidation. In Granulibacter bethesdensis (strain ATCC BAA-1260 / CGDNIH1), this protein is Cobyric acid synthase.